The primary structure comprises 384 residues: MKIAIPKERRPGEDRVAISPEVVKKLVGLGFEVIVEQGAGVGASITDDALTAAGATIASTAAQALSQADVVWKVQRPMTAEEGTDEVALIKEGAVLMCHLGALTNRPVVEALTKRKITAYAMELMPRISRAQSMDILSSQSNLAGYRAVIDGAYEFARAFPMMMTAAGTVPPARVLVFGVGVAGLQAIATAKRLGAVVMATDVRAATKEQVESLGGKFITVDDEAMKTAETAGGYAKEMGEEFRKKQAEAVLKELVKTDIAITTALIPGKPAPVLITEEMVTKMKPGSVIIDLAVEAGGNCPLSEPGKIVVKHGVKIVGHTNVPSRVAADASPLFAKNLLNFLTPHVDKDTKTLVMKLEDETVSGTCVTRDGAIVHPALTGQGA.

Residues 126–136 (PRISRAQSMDI) are RQD loop; involved in interaction with PntB. NAD(+) is bound by residues 127-129 (RIS), 132-135 (QSMD), 180-182 (VGV), 202-204 (DVR), G234, Q247, and L266.

Belongs to the AlaDH/PNT family. Heterotrimer of two alpha chains and a beta (PntB) chain; in Rhodospirillum, the alpha chain is made of two subunits (PntAA and PntAB) and forms a dimer.

It catalyses the reaction NAD(+) + NADPH + H(+)(in) = NADH + NADP(+) + H(+)(out). In terms of biological role, the transhydrogenation between NADH and NADP is coupled to respiration and ATP hydrolysis and functions as a proton pump across the membrane. This chain is NAD(P) transhydrogenase subunit alpha part 1 (pntAA), found in Rhodospirillum rubrum (strain ATCC 11170 / ATH 1.1.1 / DSM 467 / LMG 4362 / NCIMB 8255 / S1).